Here is a 336-residue protein sequence, read N- to C-terminus: Telomere-binding protein cav (336 aa).

The tract at residues 107 to 328 (RKKMVQPYPE…TITFQNSESE (222 aa)) is required for binding to Su(var)205. Disordered regions lie at residues 137–158 (RLDRWQRKKTQNLSAQESSPAR) and 199–218 (SSDLSGIGDDEDEHQQSEFQ). 2 consecutive short sequence motifs (su(var)205-binding Pro-containing repeat) follow at residues 225-231 (PETAINE) and 289-295 (PETEMNE). Residues 308–327 (MSIGPSIDSEGTITFQNSES) show a composition bias toward polar residues. The segment at 308 to 336 (MSIGPSIDSEGTITFQNSESEPIDVDSIA) is disordered.

As to quaternary structure, interacts (via C-terminus) with Su(var)205 dimer (via hinge and chromoshadow domain) and with moi to form the terminin, telomere-capping, complex. Interacts with HP6, which is also part of the terminin complex.

The protein resides in the nucleus. The protein localises to the chromosome. It localises to the telomere. Functionally, binds to chromosome ends in a sequence-dependent manner and is required for telomere capping. In Drosophila sechellia (Fruit fly), this protein is Telomere-binding protein cav.